The primary structure comprises 80 residues: MKRILIALVRFYQRFISPVFPPSCRFELTCSNYMIQAIEKHGFKGVLMGLARILRCHPWSKTGKDPIPDHFSLKRNQEGE.

Residues 61-80 form a disordered region; that stretch reads KTGKDPIPDHFSLKRNQEGE. A compositionally biased stretch (basic and acidic residues) spans 62–80; the sequence is TGKDPIPDHFSLKRNQEGE.

Belongs to the UPF0161 family.

The protein resides in the cell membrane. Could be involved in insertion of integral membrane proteins into the membrane. The polypeptide is Putative membrane protein insertion efficiency factor (Streptococcus pneumoniae (strain CGSP14)).